The sequence spans 74 residues: Conotoxin AbVIH (74 aa).

Positions 1–17 are cleaved as a signal peptide; sequence VLIIAVLFLTACQLTTA. A propeptide spanning residues 18–40 is cleaved from the precursor; that stretch reads ETSSRGKQKHRALRSTDKDSRMT. The tract at residues 19–40 is disordered; sequence TSSRGKQKHRALRSTDKDSRMT. Cystine bridges form between cysteine 43/cysteine 57, cysteine 50/cysteine 61, and cysteine 56/cysteine 68.

It belongs to the conotoxin O1 superfamily. In terms of tissue distribution, expressed by the venom duct.

The protein localises to the secreted. This chain is Conotoxin AbVIH, found in Conus abbreviatus (Abbreviated cone).